A 100-amino-acid polypeptide reads, in one-letter code: Large ribosomal subunit protein bL27 (100 aa).

Residues 1–9 (MLVMNLQLF) constitute a propeptide that is removed on maturation.

The protein belongs to the bacterial ribosomal protein bL27 family. In terms of processing, the N-terminus is cleaved by ribosomal processing cysteine protease Prp.

This Clostridium botulinum (strain 657 / Type Ba4) protein is Large ribosomal subunit protein bL27.